We begin with the raw amino-acid sequence, 130 residues long: Small ribosomal subunit protein uS8 (130 aa).

It belongs to the universal ribosomal protein uS8 family. Component of the 40S ribosomal subunit. Part of the small subunit (SSU) processome, composed of more than 70 proteins and the RNA chaperone small nucleolar RNA (snoRNA) U3.

The protein localises to the cytoplasm. Its subcellular location is the nucleus. The protein resides in the nucleolus. In terms of biological role, component of the small ribosomal subunit. Part of the small subunit (SSU) processome, first precursor of the small eukaryotic ribosomal subunit. During the assembly of the SSU processome in the nucleolus, many ribosome biogenesis factors, an RNA chaperone and ribosomal proteins associate with the nascent pre-rRNA and work in concert to generate RNA folding, modifications, rearrangements and cleavage as well as targeted degradation of pre-ribosomal RNA by the RNA exosome. Required for erythropoiesis during embryonic development. The protein is Small ribosomal subunit protein uS8 of Danio rerio (Zebrafish).